The chain runs to 788 residues: MDRDSPFADPDRSDPLPAPSNTLKASIFAQSRIVHPSTSVYNQFGRHRHDDIGQESFHEGIQPSVASLANLQGSYTAKSIHPHHSAIGLRNSSYDDHGDDADEQDPEDLLSDEELGLIAGDARNPSASLSYASNRSRKRRTNPSDPRSRASAVGGLSAKQKALWMWANVDNLDAFLQEVYAYYVGRGAICIALSRSLNLLTVAFVICFSTFLFGCIDYSSIRHDGQLSDVIVGHCVAGFSPFATLVVVLLLAAFGWQAVQFVLGLSRLRAMHRFYEQLLGIPDADVQSIPWHEVVNRLSALRDQHPTTSLSSADEMELGQRTSSSLRRSHPQPLDAHDVANRIMRQENYLIALFNENILDLSVPGLRSRSPSLTRSLEWNLHFCLLGFLFDSNGQVRHAFLSERYRADLIEGLRRRFLFMAVVNAIFAPFIVLYLLLYSFFRYFEEYHKDPSNLGSRQYTQYARWKFREFNELPHLFRRRCRTSYVAASKYMDQFPKEKTAIVARFVAFVAGSFTAVLLLASVMDPDVFVHFNITPQRNVLFYIGVFGAILAVARGMIPDEHVVFEPEAMLREVIEQTHYLPQDWKGRFHSAQVHQAFGQLYTLKIYIFLQELLSVVTTPFVLWLSLPACAPDLIDFLRKYTVHVDGLGHVCSFAVFDFARQPTASTMGGAAAKGIHRQQQQQQQQQQQSGGSGRTRAPRNGMSQAKMEQSILGFRANHPDWDPAAHASTASIQRVDDDAGATTLQYGHGDGRSTSDAPTGVGAGAKVKDLIDHIYRGSGGAAGASRW.

The segment covering M1–D14 has biased composition (basic and acidic residues). 3 disordered regions span residues M1 to T22, I87 to D108, and N124 to V153. At M1–R195 the chain is on the cytoplasmic side. The span at H97–D108 shows a compositional bias: acidic residues. The segment covering P125 to N134 has biased composition (polar residues). Residues S196–I216 traverse the membrane as a helical segment. At D217–C235 the chain is on the lumenal side. The helical transmembrane segment at V236 to W256 threads the bilayer. Over Q257–R416 the chain is Cytoplasmic. A disordered region spans residues T307–Q332. The stretch at F417–L437 is an intramembrane region. At Y438 to T500 the chain is on the cytoplasmic side. A helical transmembrane segment spans residues A501–A521. The Lumenal segment spans residues S522–R538. A helical transmembrane segment spans residues N539 to P559. The Cytoplasmic segment spans residues D560–K605. An intramembrane segment occupies I606–S626. The Cytoplasmic portion of the chain corresponds to L627–W788. Disordered regions lie at residues M668–A706 and A742–V762. Residues Q679–Q689 are compositionally biased toward low complexity.

The protein belongs to the ATG9 family. Homotrimer; forms a homotrimer with a central pore that forms a path between the two membrane leaflets. Phosphorylated by ATG1. ATG1 phosphorylation is required for preautophagosome elongation.

It localises to the preautophagosomal structure membrane. Its subcellular location is the cytoplasmic vesicle membrane. The protein localises to the golgi apparatus membrane. It is found in the endoplasmic reticulum membrane. It catalyses the reaction a 1,2-diacyl-sn-glycero-3-phosphocholine(in) = a 1,2-diacyl-sn-glycero-3-phosphocholine(out). The enzyme catalyses a 1,2-diacyl-sn-glycero-3-phospho-L-serine(in) = a 1,2-diacyl-sn-glycero-3-phospho-L-serine(out). The catalysed reaction is a 1,2-diacyl-sn-glycero-3-phosphoethanolamine(in) = a 1,2-diacyl-sn-glycero-3-phosphoethanolamine(out). It carries out the reaction a 1,2-diacyl-sn-glycero-3-phospho-(1D-myo-inositol-3-phosphate)(in) = a 1,2-diacyl-sn-glycero-3-phospho-(1D-myo-inositol-3-phosphate)(out). Functionally, phospholipid scramblase involved in autophagy and cytoplasm to vacuole transport (Cvt) vesicle formation. Cycles between the preautophagosomal structure/phagophore assembly site (PAS) and the cytoplasmic vesicle pool and supplies membrane for the growing autophagosome. Lipid scramblase activity plays a key role in preautophagosomal structure/phagophore assembly by distributing the phospholipids that arrive through ATG2 from the cytoplasmic to the luminal leaflet of the bilayer, thereby driving autophagosomal membrane expansion. Required for mitophagy. Also involved in endoplasmic reticulum-specific autophagic process and is essential for the survival of cells subjected to severe ER stress. Different machineries are required for anterograde trafficking to the PAS during either the Cvt pathway or bulk autophagy and for retrograde trafficking. The protein is Autophagy-related protein 9 (ATG9) of Mycosarcoma maydis (Corn smut fungus).